The sequence spans 327 residues: ATPase ASNA1 homolog (327 aa).

Residue 26–33 (KGGVGKTT) coordinates ATP. Asp57 is a catalytic residue. The ATP site is built by Glu238 and Asn265. Cys274 and Cys277 together coordinate Zn(2+).

It belongs to the arsA ATPase family. As to quaternary structure, homodimer.

The protein resides in the cytoplasm. It is found in the endoplasmic reticulum. In terms of biological role, ATPase required for the post-translational delivery of tail-anchored (TA) proteins to the endoplasmic reticulum. Recognizes and selectively binds the transmembrane domain of TA proteins in the cytosol. This complex then targets to the endoplasmic reticulum by membrane-bound receptors, where the tail-anchored protein is released for insertion. This process is regulated by ATP binding and hydrolysis. ATP binding drives the homodimer towards the closed dimer state, facilitating recognition of newly synthesized TA membrane proteins. ATP hydrolysis is required for insertion. Subsequently, the homodimer reverts towards the open dimer state, lowering its affinity for the membrane-bound receptor, and returning it to the cytosol to initiate a new round of targeting. The chain is ATPase ASNA1 homolog from Entamoeba histolytica (strain ATCC 30459 / HM-1:IMSS / ABRM).